Consider the following 290-residue polypeptide: Endoplasmic reticulum-Golgi intermediate compartment protein 1 (290 aa).

Residues methionine 1 to alanine 26 lie on the Cytoplasmic side of the membrane. Residues isoleucine 27–phenylalanine 47 form a helical membrane-spanning segment. The Lumenal segment spans residues isoleucine 48–threonine 254. Residue asparagine 74 is glycosylated (N-linked (GlcNAc...) asparagine). A helical transmembrane segment spans residues threonine 255 to phenylalanine 275. The Cytoplasmic portion of the chain corresponds to threonine 276–glutamine 290.

Belongs to the ERGIC family.

It localises to the endoplasmic reticulum membrane. It is found in the endoplasmic reticulum-Golgi intermediate compartment membrane. The protein localises to the golgi apparatus membrane. In terms of biological role, possible role in transport between endoplasmic reticulum and Golgi. The polypeptide is Endoplasmic reticulum-Golgi intermediate compartment protein 1 (ergic1) (Xenopus laevis (African clawed frog)).